The primary structure comprises 495 residues: UDP-N-acetylmuramate--L-alanine ligase (495 aa).

122–128 (GTHGKTT) is a binding site for ATP.

This sequence belongs to the MurCDEF family.

It is found in the cytoplasm. It catalyses the reaction UDP-N-acetyl-alpha-D-muramate + L-alanine + ATP = UDP-N-acetyl-alpha-D-muramoyl-L-alanine + ADP + phosphate + H(+). The protein operates within cell wall biogenesis; peptidoglycan biosynthesis. Functionally, cell wall formation. In Mycobacterium leprae (strain TN), this protein is UDP-N-acetylmuramate--L-alanine ligase.